Consider the following 472-residue polypeptide: Methanethiol oxidase (472 aa).

At A2 the chain carries N-acetylalanine. 3 positions are modified to phosphoserine: S111, S371, and S467.

It belongs to the selenium-binding protein family. As to quaternary structure, interacts with USP33. Post-translationally, phosphorylated. The N-terminus is blocked. In terms of tissue distribution, widely expressed. Highly expressed in liver, lung, colon, prostate, kidney and pancreas. In brain, present both in neurons and glia (at protein level). Down-regulated in lung adenocarcinoma, colorectal carcinoma and ovarian cancer. Two-fold up-regulated in brain and blood from schizophrenia patients.

The protein resides in the nucleus. It is found in the cytoplasm. It localises to the cytosol. The protein localises to the membrane. It carries out the reaction methanethiol + O2 + H2O = hydrogen sulfide + formaldehyde + H2O2 + H(+). The protein operates within organosulfur degradation. Catalyzes the oxidation of methanethiol, an organosulfur compound known to be produced in substantial amounts by gut bacteria. Selenium-binding protein which may be involved in the sensing of reactive xenobiotics in the cytoplasm. May be involved in intra-Golgi protein transport. The chain is Methanethiol oxidase (SELENBP1) from Homo sapiens (Human).